The following is a 63-amino-acid chain: Hyphancin-3G (63 aa).

An N-terminal signal peptide occupies residues 1–22 (MNFSRILFFMFACFVALASVSA). Positions 23 to 26 (VPEP) are cleaved as a propeptide — removed by a dipeptidylpeptidase. Leucine 61 bears the Leucine amide mark.

Belongs to the cecropin family.

The protein localises to the secreted. In terms of biological role, has antibacterial activity. The sequence is that of Hyphancin-3G from Hyphantria cunea (Fall webworm moth).